We begin with the raw amino-acid sequence, 303 residues long: Porphobilinogen deaminase (303 aa).

C241 carries the S-(dipyrrolylmethanemethyl)cysteine modification.

The protein belongs to the HMBS family. In terms of assembly, monomer. Dipyrromethane is required as a cofactor.

The enzyme catalyses 4 porphobilinogen + H2O = hydroxymethylbilane + 4 NH4(+). It functions in the pathway porphyrin-containing compound metabolism; protoporphyrin-IX biosynthesis; coproporphyrinogen-III from 5-aminolevulinate: step 2/4. The protein operates within porphyrin-containing compound metabolism; chlorophyll biosynthesis. In terms of biological role, tetrapolymerization of the monopyrrole PBG into the hydroxymethylbilane pre-uroporphyrinogen in several discrete steps. This Roseiflexus castenholzii (strain DSM 13941 / HLO8) protein is Porphobilinogen deaminase.